Here is a 1454-residue protein sequence, read N- to C-terminus: Serine/threonine-protein kinase VPS15 (1454 aa).

The N-myristoyl glycine moiety is linked to residue Gly-2. In terms of domain architecture, Protein kinase spans 27-300 (VHYVSQLNSS…LLNKYRGIFF (274 aa)). ATP contacts are provided by residues 33–41 (LNSSRFLKT) and Lys-54. Asp-147 serves as the catalytic Proton acceptor. HEAT repeat units lie at residues 460–497 (NKIDRVVPYFVCCFEDSDQDVQALSLLTLIQVLTSVRK), 576–613 (KLIQSVEDLTVSFLTDNDTYVKMALLQNILPLCKFFGR), 615–652 (RTNDIILSHLITYLNDKDPALRVSLIQTISGISILLGT), and 654–691 (TLEQYILPLLIQTITDSEELVVISVLQSLKSLFKTGLI). WD repeat units follow at residues 1078-1118 (NEPN…VGEV), 1126-1165 (DCSSTVTQITMIPNFDAFAVSSKDGQIIVLKVNHYQQESE), 1229-1268 (PRHGAVSSICIDEECCVLILGTTRGIIDIWDIRFNVLIRS), 1275-1315 (APIT…CQYA), 1344-1382 (RSLNALSTISVSNDKILLTDEATSSIVMFSLNELSSSKA), and 1422-1454 (YHHDIINSISTCEVDETPLLVACDNSGLIGIFQ).

The protein belongs to the protein kinase superfamily. Ser/Thr protein kinase family. Component of the autophagy-specific VPS34 PI3-kinase complex I composed of VPS15, VPS30, VPS34, ATG14 and ATG38; and of the VPS34 PI3-kinase complex II composed of VPS15, VPS30, VPS34 and VPS38. Interacts directly with ATG14 and GPA1. Interacts directly with VPS34. In terms of processing, autophosphorylated.

The protein resides in the golgi apparatus. It localises to the trans-Golgi network membrane. It is found in the endosome membrane. The enzyme catalyses L-seryl-[protein] + ATP = O-phospho-L-seryl-[protein] + ADP + H(+). It carries out the reaction L-threonyl-[protein] + ATP = O-phospho-L-threonyl-[protein] + ADP + H(+). Its function is as follows. Serine/threonine-protein kinase required for cytoplasm to vacuole transport (Cvt) and autophagy as a part of the autophagy-specific VPS34 PI3-kinase complex I. This complex is essential to recruit the ATG8-phosphatidylinositol conjugate and the ATG12-ATG5 conjugate to the pre-autophagosomal structure. Is also involved in endosome-to-Golgi retrograde transport as part of the VPS34 PI3-kinase complex II. This second complex is required for the endosome-to-Golgi retrieval of PEP1 and KEX2, and the recruitment of VPS5 and VPS7, two components of the retromer complex, to endosomal membranes (probably through the synthesis of a specific pool of phosphatidylinositol 3-phosphate recruiting the retromer to the endosomes). By regulating VPS34 kinase activity, VPS15 appears to be essential for the efficient delivery of soluble hydrolases to the yeast vacuole. May function as a G protein beta subunit to propagate the pheromone response at the endosome with GPA1. This Saccharomyces cerevisiae (strain ATCC 204508 / S288c) (Baker's yeast) protein is Serine/threonine-protein kinase VPS15.